Consider the following 463-residue polypeptide: Rubisco accumulation factor 1, chloroplastic (463 aa).

Positions 1–18 (MLSLSHPHPHPAASTTAP) are enriched in low complexity. The transit peptide at 1-31 (MLSLSHPHPHPAASTTAPRHQRTAPVWHRRR) directs the protein to the chloroplast. The segment at 1 to 84 (MLSLSHPHPH…PFHPPPSPLP (84 aa)) is disordered. Residues 19–33 (RHQRTAPVWHRRRAS) show a composition bias toward basic residues. The segment covering 43 to 53 (PGGGSTGGRGG) has biased composition (gly residues). The segment at 83-275 (LPPSLRNLDL…SGRARVELEL (193 aa)) is N-terminal alpha-helix. The stretch at 240 to 294 (RQSREAIDVQDRVAELERALQVVETESGRARVELELERARRKAAGEEEVDEEGEE) forms a coiled coil. Residues 305–450 (VTVVRLRYGE…AEVVIVVRPP (146 aa)) are C-terminal beta sheet.

The protein belongs to the RAF family. As to quaternary structure, homotrimer. As to expression, expressed in bundle sheath.

It localises to the plastid. Its subcellular location is the chloroplast. Functionally, required for assembly or stability of RuBisCO. Acts at a postchaperonin step to fold and/or assemble the large subunit (LS) into RuBisCO. The polypeptide is Rubisco accumulation factor 1, chloroplastic (Zea mays (Maize)).